We begin with the raw amino-acid sequence, 274 residues long: MSGMHGASREALAAARERLDALTDSTSVDAGSLADELAAVTALLHREVSLRRVLTDPAQSGEAKAELAQRLLGTQVSGTAVDLVAGTVRSRWSQSRDLVDALEQLANIADLTAAQKRGRLDNVEDELFRFGRIISSNTELRAALTSRSATTAAKSELLAGLLGSRAERTTERLVTRLVTAPRGRSLESGLESLSKLAADRRDRMVAVVTSAVPLSDTQKQRLGAALAKVYGRPMHLNLDVDPEVLGGIRVQVGDEVINGSIADRLEDAGRRLAS.

Belongs to the ATPase delta chain family. F-type ATPases have 2 components, F(1) - the catalytic core - and F(0) - the membrane proton channel. F(1) has five subunits: alpha(3), beta(3), gamma(1), delta(1), epsilon(1). F(0) has three main subunits: a(1), b(2) and c(10-14). The alpha and beta chains form an alternating ring which encloses part of the gamma chain. F(1) is attached to F(0) by a central stalk formed by the gamma and epsilon chains, while a peripheral stalk is formed by the delta and b chains.

The protein localises to the cell membrane. In terms of biological role, f(1)F(0) ATP synthase produces ATP from ADP in the presence of a proton or sodium gradient. F-type ATPases consist of two structural domains, F(1) containing the extramembraneous catalytic core and F(0) containing the membrane proton channel, linked together by a central stalk and a peripheral stalk. During catalysis, ATP synthesis in the catalytic domain of F(1) is coupled via a rotary mechanism of the central stalk subunits to proton translocation. Its function is as follows. This protein is part of the stalk that links CF(0) to CF(1). It either transmits conformational changes from CF(0) to CF(1) or is implicated in proton conduction. In Streptomyces coelicolor (strain ATCC BAA-471 / A3(2) / M145), this protein is ATP synthase subunit delta.